Consider the following 269-residue polypeptide: MPIQRIAITASANAPLTTTPVKIATRNLEFYYGTFQALKQINLEIPEKRVTALIGPSGCGKSTLLRIFNRIYALYPKLEARGEVFLDGENILSPKYSINRLRSKVGMVFQKPVPFPMTIYENVAYGIRHHEVMCKSQMNDRVEQALQQSALWEEVKDKLNQNALGLSGGQQQRLCIARAVALTPSVLLLDEPTSALDPISTSRIEQLIEELKTKYTIVIVTHNMQQAARVSDYTGFMYLGDLIEHDRTETIFSRPSKQQTEDYITGRFG.

The ABC transporter domain maps to 23 to 264; sequence IATRNLEFYY…PSKQQTEDYI (242 aa). 55 to 62 contributes to the ATP binding site; it reads GPSGCGKS.

It belongs to the ABC transporter superfamily. Phosphate importer (TC 3.A.1.7) family. In terms of assembly, the complex is composed of two ATP-binding proteins (PstB), two transmembrane proteins (PstC and PstA) and a solute-binding protein (PstS).

The protein resides in the cell inner membrane. It carries out the reaction phosphate(out) + ATP + H2O = ADP + 2 phosphate(in) + H(+). Functionally, part of the ABC transporter complex PstSACB involved in phosphate import. Responsible for energy coupling to the transport system. The sequence is that of Phosphate import ATP-binding protein PstB from Xylella fastidiosa (strain Temecula1 / ATCC 700964).